The following is a 307-amino-acid chain: Ninja-family protein 5 (307 aa).

Disordered stretches follow at residues 1 to 159 (MASR…EHTV) and 173 to 208 (TAGS…EPQP). The span at 8-30 (GGFGRDGGQAPVGGAGAAPGPGG) shows a compositional bias: gly residues. Polar residues-rich tracts occupy residues 63 to 83 (QRSS…GTSC) and 173 to 183 (TAGSPTPSRPQ).

It belongs to the Ninja family.

The protein resides in the nucleus. The chain is Ninja-family protein 5 from Zea mays (Maize).